The chain runs to 790 residues: Spermatogenesis-associated protein 20 (790 aa).

Residues 1 to 19 (MSHHSSPPPKHKGEHKGHG) show a composition bias toward basic residues. The interval 1 to 67 (MSHHSSPPPK…PPPAPPKTVN (67 aa)) is disordered. Ser5 bears the Phosphoserine mark. The span at 23–36 (GSERGSSSRDKDRS) shows a compositional bias: basic and acidic residues. Residue Ser653 is modified to Phosphoserine.

It is found in the secreted. May play a role in fertility regulation. This chain is Spermatogenesis-associated protein 20 (Spata20), found in Mus musculus (Mouse).